Consider the following 217-residue polypeptide: Yop proteins translocation protein R (217 aa).

Helical transmembrane passes span 11–31 (IIVL…TSFV), 53–73 (MAMY…VGFA), 157–177 (IGFL…NILL), and 181–201 (MMMV…FVLL).

This sequence belongs to the FliP/MopC/SpaP family.

Its subcellular location is the cell membrane. Component of the yop secretion machinery. May have a role in the negative pathway regulation of yop expression controlled by calcium. The protein is Yop proteins translocation protein R (yscR) of Yersinia pestis.